The primary structure comprises 64 residues: Small ribosomal subunit protein eS17 (64 aa).

Belongs to the eukaryotic ribosomal protein eS17 family.

The chain is Small ribosomal subunit protein eS17 from Methanococcoides burtonii (strain DSM 6242 / NBRC 107633 / OCM 468 / ACE-M).